A 1088-amino-acid polypeptide reads, in one-letter code: DNA damage-binding protein 1b (1088 aa).

Belongs to the DDB1 family. Interacts with DDA1. Binds to KTN80.2/DWA3. Interacts with HTD1.

Its subcellular location is the nucleus. Its pathway is protein modification; protein ubiquitination. Its function is as follows. Component of light signal transduction machinery. Involved in repression of photomorphogenesis in darkness. Plays a role in DNA repair by forming with DDB2 the UV-damaged DNA-binding protein complex (UV-DDB). This chain is DNA damage-binding protein 1b, found in Arabidopsis thaliana (Mouse-ear cress).